Reading from the N-terminus, the 444-residue chain is Tubulin beta chain (444 aa).

8 residues coordinate GTP: Gln-11, Glu-69, Ser-138, Gly-142, Thr-143, Gly-144, Asn-204, and Asn-226. Glu-69 serves as a coordination point for Mg(2+).

It belongs to the tubulin family. In terms of assembly, dimer of alpha and beta chains. A typical microtubule is a hollow water-filled tube with an outer diameter of 25 nm and an inner diameter of 15 nM. Alpha-beta heterodimers associate head-to-tail to form protofilaments running lengthwise along the microtubule wall with the beta-tubulin subunit facing the microtubule plus end conferring a structural polarity. Microtubules usually have 13 protofilaments but different protofilament numbers can be found in some organisms and specialized cells. Mg(2+) is required as a cofactor.

It localises to the cytoplasm. It is found in the cytoskeleton. Its function is as follows. Tubulin is the major constituent of microtubules, a cylinder consisting of laterally associated linear protofilaments composed of alpha- and beta-tubulin heterodimers. Microtubules grow by the addition of GTP-tubulin dimers to the microtubule end, where a stabilizing cap forms. Below the cap, tubulin dimers are in GDP-bound state, owing to GTPase activity of alpha-tubulin. This chain is Tubulin beta chain, found in Phytophthora cinnamomi (Cinnamon fungus).